The primary structure comprises 122 residues: Seripauperin-5 (122 aa).

Residues 7–24 traverse the membrane as a helical segment; the sequence is IAAGVAAIAAGASAAATT.

The protein belongs to the SRP1/TIP1 family. Seripauperin subfamily.

It is found in the membrane. The chain is Seripauperin-5 (PAU5) from Saccharomyces cerevisiae (strain ATCC 204508 / S288c) (Baker's yeast).